The chain runs to 172 residues: Adenine phosphoribosyltransferase (172 aa).

The protein belongs to the purine/pyrimidine phosphoribosyltransferase family. In terms of assembly, homodimer.

The protein localises to the cytoplasm. It carries out the reaction AMP + diphosphate = 5-phospho-alpha-D-ribose 1-diphosphate + adenine. Its pathway is purine metabolism; AMP biosynthesis via salvage pathway; AMP from adenine: step 1/1. Functionally, catalyzes a salvage reaction resulting in the formation of AMP, that is energically less costly than de novo synthesis. This is Adenine phosphoribosyltransferase from Streptococcus pyogenes serotype M5 (strain Manfredo).